Here is a 668-residue protein sequence, read N- to C-terminus: MASAATIETEKYSLLEDFNVDVEVDDEEYESFSLCFWVYLLNSTTFPSTIIRQVHSDMSVSAPFLVLDENKKMMLLPLTLLHKEAPDPVDTSSWTQVPSVSTKSKFPLEKWVHVGCEVSRNFMRLFIDGNMEGEQFVTSLLTKNAYPECPRKISLFSVGGDGYSVQGFIQCAEVLPASDHVEHHYMKDPPLMLSVNKSSSSGIKLDDCGVWQASCKEMFSLDVLLSNAIGQPVHKDVEVVASLLYADTLPEAKMGEAEAPLLIRDEGVQFSSDDRPIKLLNGRSSFKLKISQLSSNSDDRLFWIKFGIRNAKDYPFLQAVSNPIRCISVSPEVQPVSVTPKRLTNIDHLSSTESPDLLQNTSSVKRIRLGKESVSGSEESYQQCNSHPQTSRQFENGNGMRLHEEDNSSIDSENSEMRYTISDSTIFKYCLGNLIDKALLLKEITNNSSDDEVLEFANQVSLYSGCSHHSYQINMARELIAEGTNAWILISRNNQHVHWDNVVYEIEEHFMRISKCSSRSLTHQDFELLRRISGCYEYITQENFEKMWCWLFPVAYSISRGLINGMWRSSSPKWIEGFITKEEAEHSLQGQEPGTFILRFPISRTWPHPDAGSLVVTYVGHDFALHHKQLKIDNICESSERYMDAKPLQDMLLAEPELSRLGRIKRSH.

The disordered stretch occupies residues 373-411 (SVSGSEESYQQCNSHPQTSRQFENGNGMRLHEEDNSSID). The span at 374 to 396 (VSGSEESYQQCNSHPQTSRQFEN) shows a compositional bias: polar residues. Residues 574-642 (WIEGFITKEE…DNICESSERY (69 aa)) enclose the SH2 domain.

Phosphorylated on tyrosine residues. Expressed in roots, leaves, stems and flowers.

The protein is SH2 domain-containing protein B of Arabidopsis thaliana (Mouse-ear cress).